The following is a 438-amino-acid chain: MDQMNYQNKKVLVYGWARSGKAVYQLLKKIGANVYVTADEEPTDLFDDVNFVDDIDESFDLLVKNPGIRYEKEIIKKALNLNIPVITEVQVALDQFKGEVLAVTGSNGKTTTTTLIGKMLKADNVDVKVGGNIGIPVSELMLSDSQPRVLMLELSSFQLLGAQNIKPKIAVITNLFSSHIDFHHTRGNYLRAKFSITQHQTKDDYLVLNDSSIDSKDFAKRSQADDYYFSPTNTSVNTYVNDGTIYFDDEKIIDLSKVVLVGEHNLENILAAVTAAKIFGVSNRAIEKVLTSFKGLEHRLEAVGVIKERTVYNDSKATDIEATQKALASFKEPINLIAGGLDRGDDLNRLVPNFKNVVSLITYGQTKNKLQSAGEKAGIKQTVVVDTLKEAVAKAKELSRPGQVLLFSPAAASWDQFPNFEIRGEEFKKMIKNREGWS.

105-111 (GSNGKTT) serves as a coordination point for ATP.

The protein belongs to the MurCDEF family.

The protein resides in the cytoplasm. The enzyme catalyses UDP-N-acetyl-alpha-D-muramoyl-L-alanine + D-glutamate + ATP = UDP-N-acetyl-alpha-D-muramoyl-L-alanyl-D-glutamate + ADP + phosphate + H(+). Its pathway is cell wall biogenesis; peptidoglycan biosynthesis. Cell wall formation. Catalyzes the addition of glutamate to the nucleotide precursor UDP-N-acetylmuramoyl-L-alanine (UMA). This chain is UDP-N-acetylmuramoylalanine--D-glutamate ligase, found in Oenococcus oeni (strain ATCC BAA-331 / PSU-1).